The following is a 772-amino-acid chain: Protein transport protein SEC23 F (772 aa).

Zn(2+) is bound by residues Cys65, Cys68, Cys87, and Cys90. A zinc finger-like region spans residues 65–90 (CKTCKALLNAFARVDFAAMNWVCPFC).

Belongs to the SEC23/SEC24 family. SEC23 subfamily. As to quaternary structure, component of the coat protein complex II (COPII), composed of at least five proteins: the Sec23/24 complex, the Sec13/31 complex and Sar1. Interacts with SEC24A.

The protein localises to the cytoplasmic vesicle. Its subcellular location is the COPII-coated vesicle membrane. It localises to the endoplasmic reticulum membrane. It is found in the membrane. In terms of biological role, component of the coat protein complex II (COPII) which promotes the formation of transport vesicles from the endoplasmic reticulum (ER). The coat has two main functions, the physical deformation of the endoplasmic reticulum membrane into vesicles and the selection of cargo molecules. In Arabidopsis thaliana (Mouse-ear cress), this protein is Protein transport protein SEC23 F.